The sequence spans 367 residues: Chorismate synthase (367 aa).

Arginine 48 and arginine 54 together coordinate NADP(+). FMN is bound by residues arginine 125–serine 127, asparagine 238–alanine 239, glycine 278, lysine 293–serine 297, and arginine 319.

This sequence belongs to the chorismate synthase family. Homotetramer. It depends on FMNH2 as a cofactor.

It catalyses the reaction 5-O-(1-carboxyvinyl)-3-phosphoshikimate = chorismate + phosphate. It participates in metabolic intermediate biosynthesis; chorismate biosynthesis; chorismate from D-erythrose 4-phosphate and phosphoenolpyruvate: step 7/7. Catalyzes the anti-1,4-elimination of the C-3 phosphate and the C-6 proR hydrogen from 5-enolpyruvylshikimate-3-phosphate (EPSP) to yield chorismate, which is the branch point compound that serves as the starting substrate for the three terminal pathways of aromatic amino acid biosynthesis. This reaction introduces a second double bond into the aromatic ring system. This is Chorismate synthase from Xanthomonas campestris pv. campestris (strain B100).